A 498-amino-acid polypeptide reads, in one-letter code: Aspartyl/glutamyl-tRNA(Asn/Gln) amidotransferase subunit B (498 aa).

This sequence belongs to the GatB/GatE family. GatB subfamily. As to quaternary structure, heterotrimer of A, B and C subunits.

It catalyses the reaction L-glutamyl-tRNA(Gln) + L-glutamine + ATP + H2O = L-glutaminyl-tRNA(Gln) + L-glutamate + ADP + phosphate + H(+). The catalysed reaction is L-aspartyl-tRNA(Asn) + L-glutamine + ATP + H2O = L-asparaginyl-tRNA(Asn) + L-glutamate + ADP + phosphate + 2 H(+). Functionally, allows the formation of correctly charged Asn-tRNA(Asn) or Gln-tRNA(Gln) through the transamidation of misacylated Asp-tRNA(Asn) or Glu-tRNA(Gln) in organisms which lack either or both of asparaginyl-tRNA or glutaminyl-tRNA synthetases. The reaction takes place in the presence of glutamine and ATP through an activated phospho-Asp-tRNA(Asn) or phospho-Glu-tRNA(Gln). The protein is Aspartyl/glutamyl-tRNA(Asn/Gln) amidotransferase subunit B of Caulobacter vibrioides (strain ATCC 19089 / CIP 103742 / CB 15) (Caulobacter crescentus).